Here is a 61-residue protein sequence, read N- to C-terminus: uncharacterized protein (61 aa).

A helical transmembrane segment spans residues 10–27; that stretch reads RILFFFFIFFTLFLFNIP.

The protein localises to the membrane. This is an uncharacterized protein from Dictyostelium discoideum (Social amoeba).